Here is a 485-residue protein sequence, read N- to C-terminus: N-succinylglutamate 5-semialdehyde dehydrogenase (485 aa).

Residue 220-225 (GSANTG) participates in NAD(+) binding. Catalysis depends on residues Glu-243 and Cys-278.

It belongs to the aldehyde dehydrogenase family. AstD subfamily.

The catalysed reaction is N-succinyl-L-glutamate 5-semialdehyde + NAD(+) + H2O = N-succinyl-L-glutamate + NADH + 2 H(+). It participates in amino-acid degradation; L-arginine degradation via AST pathway; L-glutamate and succinate from L-arginine: step 4/5. Catalyzes the NAD-dependent reduction of succinylglutamate semialdehyde into succinylglutamate. The chain is N-succinylglutamate 5-semialdehyde dehydrogenase from Aliivibrio salmonicida (strain LFI1238) (Vibrio salmonicida (strain LFI1238)).